We begin with the raw amino-acid sequence, 463 residues long: Chromosomal replication initiator protein DnaA (463 aa).

The tract at residues 1–83 (MSTNQIILTD…LQLFQHYNNT (83 aa)) is domain I, interacts with DnaA modulators. A domain II region spans residues 83 to 124 (TIKSIEIITKELPGITQTVIALPTKTFADIGSSELNAENIFS). The tract at residues 125–343 (TLDVRFTFDN…GALNKVIAHS (219 aa)) is domain III, AAA+ region. Residues G171, G173, K174, and T175 each coordinate ATP. The domain IV, binds dsDNA stretch occupies residues 344-463 (NFTLKEITLE…INLLMKILQN (120 aa)).

The protein belongs to the DnaA family. As to quaternary structure, oligomerizes as a right-handed, spiral filament on DNA at oriC.

It is found in the cytoplasm. Plays an essential role in the initiation and regulation of chromosomal replication. ATP-DnaA binds to the origin of replication (oriC) to initiate formation of the DNA replication initiation complex once per cell cycle. Binds the DnaA box (a 9 base pair repeat at the origin) and separates the double-stranded (ds)DNA. Forms a right-handed helical filament on oriC DNA; dsDNA binds to the exterior of the filament while single-stranded (ss)DNA is stabiized in the filament's interior. The ATP-DnaA-oriC complex binds and stabilizes one strand of the AT-rich DNA unwinding element (DUE), permitting loading of DNA polymerase. After initiation quickly degrades to an ADP-DnaA complex that is not apt for DNA replication. Binds acidic phospholipids. The sequence is that of Chromosomal replication initiator protein DnaA from Rickettsia massiliae (strain Mtu5).